A 376-amino-acid chain; its full sequence is Putative 12-oxophytodienoate reductase 13 (376 aa).

FMN-binding positions include 25 to 27, A58, and Q99; that span reads PLT. 165–168 is a binding site for substrate; that stretch reads HGAH. Residues R217, G301, and 322–323 contribute to the FMN site; that span reads GR.

Belongs to the NADH:flavin oxidoreductase/NADH oxidase family. FMN serves as cofactor.

In terms of biological role, putative oxophytodienoate reductase that may be involved in the biosynthesis or metabolism of oxylipin signaling molecules. This is Putative 12-oxophytodienoate reductase 13 (OPR13) from Oryza sativa subsp. japonica (Rice).